The sequence spans 168 residues: Cyclic pyranopterin monophosphate synthase (168 aa).

Residues 83 to 85 and 121 to 122 each bind substrate; these read LCH and ME. Asp136 is an active-site residue.

This sequence belongs to the MoaC family. In terms of assembly, homohexamer; trimer of dimers.

It carries out the reaction (8S)-3',8-cyclo-7,8-dihydroguanosine 5'-triphosphate = cyclic pyranopterin phosphate + diphosphate. Its pathway is cofactor biosynthesis; molybdopterin biosynthesis. In terms of biological role, catalyzes the conversion of (8S)-3',8-cyclo-7,8-dihydroguanosine 5'-triphosphate to cyclic pyranopterin monophosphate (cPMP). This is Cyclic pyranopterin monophosphate synthase from Nostoc sp. (strain PCC 7120 / SAG 25.82 / UTEX 2576).